The primary structure comprises 235 residues: tRNA (adenine(37)-N6)-methyltransferase (235 aa).

The region spanning 6 to 147 (FEQIGVIRSP…YLPFAESLPD (142 aa)) is the TsaA-like domain. S-adenosyl-L-methionine-binding positions include 23 to 25 (PRQ), 64 to 65 (HQ), Arg-92, and 127 to 130 (VDGT).

It belongs to the tRNA methyltransferase O family. In terms of assembly, homodimer.

It carries out the reaction N(6)-L-threonylcarbamoyladenosine(37) in tRNA + S-adenosyl-L-methionine = N(6)-methyl,N(6)-L-threonylcarbamoyladenosine(37) in tRNA + S-adenosyl-L-homocysteine + H(+). Its function is as follows. S-adenosyl-L-methionine-dependent methyltransferase responsible for the addition of the methyl group in the formation of N6-methyl-N6-threonylcarbamoyladenosine at position 37 (m(6)t(6)A37) of the tRNA anticodon loop of tRNA(Thr)(GGU) that read codons starting with adenosine. The methyl group of m(6)t(6)A37 appears to slightly improve the efficiency of the tRNA decoding ability. This is tRNA (adenine(37)-N6)-methyltransferase from Escherichia coli (strain K12).